We begin with the raw amino-acid sequence, 488 residues long: Malonate-semialdehyde dehydrogenase 1 (488 aa).

Residues F156, K180, E183, R184, S233, and S255 each coordinate NAD(+). The Nucleophile role is filled by C288. E387 lines the NAD(+) pocket.

The protein belongs to the aldehyde dehydrogenase family. IolA subfamily. Homotetramer.

The enzyme catalyses 3-oxopropanoate + NAD(+) + CoA + H2O = hydrogencarbonate + acetyl-CoA + NADH + H(+). The catalysed reaction is 2-methyl-3-oxopropanoate + NAD(+) + CoA + H2O = propanoyl-CoA + hydrogencarbonate + NADH + H(+). It functions in the pathway polyol metabolism; myo-inositol degradation into acetyl-CoA; acetyl-CoA from myo-inositol: step 7/7. Functionally, catalyzes the oxidation of malonate semialdehyde (MSA) and methylmalonate semialdehyde (MMSA) into acetyl-CoA and propanoyl-CoA, respectively. Is involved in a myo-inositol catabolic pathway. Bicarbonate, and not CO2, is the end-product of the enzymatic reaction. The sequence is that of Malonate-semialdehyde dehydrogenase 1 from Geobacillus kaustophilus (strain HTA426).